A 259-amino-acid chain; its full sequence is tRNA (guanine-N(7)-)-methyltransferase (259 aa).

The interval methionine 1–glycine 73 is disordered. Residues glutamate 91, glutamate 116, asparagine 143, and aspartate 166 each contribute to the S-adenosyl-L-methionine site. Residue aspartate 166 is part of the active site. Residues lysine 170, aspartate 202, and threonine 238–glutamate 241 each bind substrate.

Belongs to the class I-like SAM-binding methyltransferase superfamily. TrmB family.

The enzyme catalyses guanosine(46) in tRNA + S-adenosyl-L-methionine = N(7)-methylguanosine(46) in tRNA + S-adenosyl-L-homocysteine. It functions in the pathway tRNA modification; N(7)-methylguanine-tRNA biosynthesis. Catalyzes the formation of N(7)-methylguanine at position 46 (m7G46) in tRNA. The chain is tRNA (guanine-N(7)-)-methyltransferase from Mycolicibacterium paratuberculosis (strain ATCC BAA-968 / K-10) (Mycobacterium paratuberculosis).